The primary structure comprises 1377 residues: DNA-directed RNA polymerase subunit beta (1377 aa).

The protein belongs to the RNA polymerase beta chain family. The RNAP catalytic core consists of 2 alpha, 1 beta, 1 beta' and 1 omega subunit. When a sigma factor is associated with the core the holoenzyme is formed, which can initiate transcription.

The catalysed reaction is RNA(n) + a ribonucleoside 5'-triphosphate = RNA(n+1) + diphosphate. Functionally, DNA-dependent RNA polymerase catalyzes the transcription of DNA into RNA using the four ribonucleoside triphosphates as substrates. The sequence is that of DNA-directed RNA polymerase subunit beta from Brucella abortus (strain S19).